The primary structure comprises 404 residues: CCA-adding enzyme (404 aa).

ATP is bound by residues G27 and R30. Residues G27 and R30 each coordinate CTP. The Mg(2+) site is built by D40 and D42. ATP-binding residues include R111, D154, R157, R160, and R163. Positions 111, 154, 157, 160, and 163 each coordinate CTP.

Belongs to the tRNA nucleotidyltransferase/poly(A) polymerase family. Bacterial CCA-adding enzyme type 3 subfamily. Homodimer. The cofactor is Mg(2+).

The enzyme catalyses a tRNA precursor + 2 CTP + ATP = a tRNA with a 3' CCA end + 3 diphosphate. It carries out the reaction a tRNA with a 3' CCA end + 2 CTP + ATP = a tRNA with a 3' CCACCA end + 3 diphosphate. Catalyzes the addition and repair of the essential 3'-terminal CCA sequence in tRNAs without using a nucleic acid template. Adds these three nucleotides in the order of C, C, and A to the tRNA nucleotide-73, using CTP and ATP as substrates and producing inorganic pyrophosphate. tRNA 3'-terminal CCA addition is required both for tRNA processing and repair. Also involved in tRNA surveillance by mediating tandem CCA addition to generate a CCACCA at the 3' terminus of unstable tRNAs. While stable tRNAs receive only 3'-terminal CCA, unstable tRNAs are marked with CCACCA and rapidly degraded. In Geobacillus kaustophilus (strain HTA426), this protein is CCA-adding enzyme.